The sequence spans 137 residues: Small ribosomal subunit protein uS12 (137 aa).

Disordered stretches follow at residues 1–22 (MPTI…SKSP) and 35–57 (ATNN…TPKK). The segment covering 9 to 18 (RKPRKSKVSK) has biased composition (basic residues). Aspartate 102 carries the 3-methylthioaspartic acid modification.

It belongs to the universal ribosomal protein uS12 family. In terms of assembly, part of the 30S ribosomal subunit. Contacts proteins S8 and S17. May interact with IF1 in the 30S initiation complex.

Functionally, with S4 and S5 plays an important role in translational accuracy. Interacts with and stabilizes bases of the 16S rRNA that are involved in tRNA selection in the A site and with the mRNA backbone. Located at the interface of the 30S and 50S subunits, it traverses the body of the 30S subunit contacting proteins on the other side and probably holding the rRNA structure together. The combined cluster of proteins S8, S12 and S17 appears to hold together the shoulder and platform of the 30S subunit. The sequence is that of Small ribosomal subunit protein uS12 from Leuconostoc mesenteroides subsp. mesenteroides (strain ATCC 8293 / DSM 20343 / BCRC 11652 / CCM 1803 / JCM 6124 / NCDO 523 / NBRC 100496 / NCIMB 8023 / NCTC 12954 / NRRL B-1118 / 37Y).